Here is a 378-residue protein sequence, read N- to C-terminus: D-alanine--D-alanine ligase (378 aa).

The 207-residue stretch at 141–347 folds into the ATP-grasp domain; sequence KKLLTLNGIR…YSELIDQLIQ (207 aa). 171–226 is a binding site for ATP; the sequence is AEELGETLFVKPARQGSSVGIHKVRNEEEYNAALEDGFKYDYKILVEEAIKNPREV. Residues Asp301, Glu314, and Asn316 each coordinate Mg(2+).

It belongs to the D-alanine--D-alanine ligase family. It depends on Mg(2+) as a cofactor. The cofactor is Mn(2+).

Its subcellular location is the cytoplasm. It catalyses the reaction 2 D-alanine + ATP = D-alanyl-D-alanine + ADP + phosphate + H(+). The protein operates within cell wall biogenesis; peptidoglycan biosynthesis. Cell wall formation. This chain is D-alanine--D-alanine ligase, found in Ligilactobacillus salivarius (strain UCC118) (Lactobacillus salivarius).